A 413-amino-acid chain; its full sequence is Azaphilone biosynthesis cluster protein M (413 aa).

A compositionally biased stretch (polar residues) spans Ser-123–Phe-138. Residues Ser-123–Ser-145 are disordered.

The protein operates within secondary metabolite biosynthesis. In terms of biological role, part of the gene cluster that mediates the biosynthesis of azaterrilone A and other azaphilones, a class of fungal metabolites characterized by a highly oxygenated pyrano-quinone bicyclic core and exhibiting a broad range of bioactivities. The first step of the pathway begins with the non-reducing polyketide synthase tazA that assembles one acetyl-CoA starter unit, five malonyl-CoA units, and catalyzes a series of Claisen condensations, methylation, PT-mediated cyclization, and finally releases the first hexaketide precursor through the R-domain. The tazA product then undergoes reduction on its terminal ketone and the following pyran-ring formation by yet undetermined enzyme(s). Dehydration and enoyl reduction, possibly involving the trans-enoyl reductase tazE leads to the next intermediate. TazD is predicted as an acetyltransferase and might catalyze the acetylation steps leading to the synthesis of azaterrilone A. Azaterrilone A is not the final product of the taz pathway and both the highly reducing polyketide synthase tazB and the dual enzyme tazHJ catalyze late steps of the pathway, leading to the production of the 2 final stereoisomers that contain additional polyketide modification whose structures have still to be determined. This Aspergillus terreus (strain NIH 2624 / FGSC A1156) protein is Azaphilone biosynthesis cluster protein M.